Here is a 1054-residue protein sequence, read N- to C-terminus: Desmoglein-1 (1054 aa).

The N-terminal stretch at 1–23 is a signal peptide; sequence MNWHFLRTATVLLIFLVVVEINS. A propeptide spanning residues 24–49 is cleaved from the precursor; that stretch reads EFRIQVRDYNTKNGTIKWHSIRRQKR. N-linked (GlcNAc...) asparagine glycosylation is found at Asn36, Asn110, and Asn180. Cadherin domains are found at residues 50–157, 158–269, 270–389, and 386–493; these read EWIK…PPVF, SMST…IPYM, EPSS…RPGS, and RPGS…KDSE. The Extracellular segment spans residues 50–566; it reads EWIKFAAACR…NLSDNVHFGP (517 aa). The tract at residues 487-554 is disordered; sequence GWEKDSEKVT…QSNNNHQELG (68 aa). A compositionally biased stretch (low complexity) spans 496 to 507; the sequence is TSSQNSGSSTGD. Residues 508 to 517 show a composition bias toward gly residues; the sequence is SSGGTGGGGR. The segment covering 523-534 has biased composition (low complexity); sequence GDTTTNTGGKTS. A compositionally biased stretch (polar residues) spans 542-554; that stretch reads TQTQSNNNHQELG. An N-linked (GlcNAc...) asparagine glycan is attached at Asn557. The helical transmembrane segment at 567–587 threads the bilayer; that stretch reads AGIGLLIMGFLVLGLVPFLLM. The Cytoplasmic segment spans residues 588 to 1054; the sequence is CCDCGGAPGA…TKYSTVQYTK (467 aa). 5 Desmoglein repeat repeats span residues 830-856, 857-886, 887-916, 917-944, and 945-973; these read TYPS…TVTE, SYTT…ERVV, GPIS…ERVI, APSS…ERVI, and RPAS…ERVV. The tract at residues 1018–1040 is disordered; the sequence is GHVRSSSDHHFSQTLGSASPSTA. A compositionally biased stretch (polar residues) spans 1029 to 1040; it reads SQTLGSASPSTA.

Binds to JUP/plakoglobin. Interacts with PKP2. Interacts with DSC3; there is evidence to suggest that the interaction promotes cell-cell adhesion of keratinocytes.

The protein localises to the cell membrane. It localises to the cell junction. It is found in the desmosome. The protein resides in the cytoplasm. Its subcellular location is the nucleus. Its function is as follows. Component of intercellular desmosome junctions. Involved in the interaction of plaque proteins and intermediate filaments mediating cell-cell adhesion. The chain is Desmoglein-1 (DSG1) from Canis lupus familiaris (Dog).